Here is a 356-residue protein sequence, read N- to C-terminus: tRNA-specific 2-thiouridylase MnmA 1 (356 aa).

ATP-binding positions include Gly-8–Ser-15 and Met-34. Cys-103 (nucleophile) is an active-site residue. The cysteines at positions 103 and 199 are disulfide-linked. Residue Gly-127 coordinates ATP. Residues Lys-149–Gln-151 form an interaction with tRNA region. Residue Cys-199 is the Cysteine persulfide intermediate of the active site. The interaction with tRNA stretch occupies residues Arg-305–Tyr-306.

Belongs to the MnmA/TRMU family.

Its subcellular location is the cytoplasm. The catalysed reaction is S-sulfanyl-L-cysteinyl-[protein] + uridine(34) in tRNA + AH2 + ATP = 2-thiouridine(34) in tRNA + L-cysteinyl-[protein] + A + AMP + diphosphate + H(+). In terms of biological role, catalyzes the 2-thiolation of uridine at the wobble position (U34) of tRNA, leading to the formation of s(2)U34. This chain is tRNA-specific 2-thiouridylase MnmA 1, found in Clostridium botulinum (strain Langeland / NCTC 10281 / Type F).